We begin with the raw amino-acid sequence, 839 residues long: Toll-like receptor 4 (839 aa).

The signal sequence occupies residues 1-23 (MMSASRLAGTLIPAMAFLSCVRP). The Extracellular portion of the chain corresponds to 24–631 (ESWEPCVEVV…SLNITCQMNK (608 aa)). A disulfide bridge connects residues Cys-29 and Cys-40. Asn-35 is a glycosylation site (N-linked (GlcNAc...) asparagine). 5 LRR repeats span residues 55 to 76 (STKN…SFFS), 79 to 100 (ELQV…AYQS), 103 to 124 (HLST…AFSG), 127 to 148 (SLQK…PIGH), and 151 to 172 (TLKE…EYFS). The N-linked (GlcNAc...) asparagine glycan is linked to Asn-173. 3 LRR repeats span residues 176 to 199 (NLEH…RVLH), 205 to 225 (NLSL…AFKE), and 227 to 247 (RLHK…KTCI). An N-linked (GlcNAc...) asparagine glycan is attached at Asn-205. Cys-281 and Cys-306 are disulfide-bonded. Asn-282 and Asn-309 each carry an N-linked (GlcNAc...) asparagine glycan. 10 LRR repeats span residues 331–351 (GWQH…LKLK), 352–373 (SLKR…VDLP), 374–394 (SLEF…CSQS), 400–422 (SLKY…LGLE), 423–444 (QLEH…SVFL), 448–456 (NLIYLDISH), 472–495 (SLEV…FTEL), 497–518 (NLTF…AFNS), 521–542 (SLQV…PYKC), and 545–565 (SLQV…QELQ). Cys-390 and Cys-391 form a disulfide bridge. Residues Asn-497 and Asn-526 are each glycosylated (N-linked (GlcNAc...) asparagine). The N-linked (GlcNAc...) asparagine glycan is linked to Asn-575. Positions 579-629 (NDFACTCEHQSFLQWIKDQRQLLVEVERMECATPSDKQGMPVLSLNITCQM) constitute an LRRCT domain. 2 cysteine pairs are disulfide-bonded: Cys-583–Cys-609 and Cys-585–Cys-627. Asn-624 and Asn-630 each carry an N-linked (GlcNAc...) asparagine glycan. Residues 632–652 (TIIGVSVLSVLVVSVVAVLVY) form a helical membrane-spanning segment. Topologically, residues 653 to 839 (KFYFHLMLLA…GCNWQEATSI (187 aa)) are cytoplasmic. The TIR domain maps to 672-815 (NIYDAFVIYS…IFWRRLRKAL (144 aa)).

This sequence belongs to the Toll-like receptor family. In terms of assembly, belongs to the lipopolysaccharide (LPS) receptor, a multi-protein complex containing at least CD14, LY96 and TLR4. Binding to bacterial LPS leads to homodimerization. Interacts with LY96 via the extracellular domain. Interacts with MYD88. Interacts (via TIR domains) with TIRAP. Interacts with TICAM2. Interacts with NOX4. Interacts with CNPY3. Interacts with HSP90B1. The interaction with both CNPY3 and HSP90B1 is required for proper folding in the endoplasmic reticulum. Interacts with MAP3K21; this interaction leads to negative regulation of TLR4 signaling. Interacts with CD36, following CD36 stimulation by oxLDL or amyloid-beta 42, and forms a heterodimer with TLR6. The trimeric complex is internalized and triggers inflammatory response. LYN kinase activity facilitates TLR4-TLR6 heterodimerization and signal initiation. Interacts with TICAM1 in response to LPS in a WDFY1-dependent manner. Interacts with WDFY1 in response to LPS. Interacts with SMPDL3B. Interacts with CEACAM1; upon lipopolysaccharide stimulation, forms a complex including TLR4 and the phosphorylated form of SYK and CEACAM1, which in turn, recruits PTPN6 that dephosphorylates SYK, reducing the production of reactive oxygen species (ROS) and lysosome disruption, which in turn, reduces the activity of the inflammasome. Interacts with RFTN1; the interaction occurs in response to lipopolysaccharide stimulation. Interacts with SCIMP; the interaction occurs in response to lipopolysaccharide stimulation and is enhanced by phosphorylation of SCIMP by LYN. This interaction facilitates the phosphorylation of TLR4 by LYN which elicits a selective cytokine response in macrophages. Interacts with TRAF3IP3. Interacts with TREM1; this interaction enhances TLR4-mediated inflammatory response. Interacts with ZG16B/PAUF. Interacts with CD82; this interaction inhibits TLR4-mediated signaling pathway. Interacts with neutrophil recruitment protein from Aedes aegypti saliva; the interaction probably promotes activation of canonical NF-kappa-B signaling in skin-resident macrophages and subsequent expression of neutrophil chemoattractants. As to quaternary structure, (Microbial infection) In case of infection, interacts with uropathogenic E.coli protein TcpC. (Microbial infection) In case of infection, interacts with B.melitensis protein TcpB; TcpB abolishes the TLR4-TIRAP interaction in vitro. In terms of assembly, (Microbial infection) Interacts with ebolavirus protein GP; this interaction leads to the production of proinflammatory cytokines and suppressor of cytokine signaling 1/SOCS1. N-Glycosylation of Asn-526 and Asn-575 by STT3A-containing OST-A complex is necessary for the expression of TLR4 on the cell surface and the LPS-response. Likewise, mutants lacking two or more of the other N-glycosylation sites were deficient in interaction with LPS. Post-translationally, phosphorylated on tyrosine residues by LYN after binding lipopolysaccharide. In terms of processing, ubiquitinated by RNF128 via 'Lys-28'-linked polyubiquitin chains, leading to proteasomal degradation. As to expression, highly expressed in placenta, spleen and peripheral blood leukocytes. Detected in monocytes, macrophages, dendritic cells and several types of T-cells. Expressed in pancreatic cancer cells but not in normal pancreatic cells (at protein level).

The protein localises to the cell membrane. Its subcellular location is the early endosome. The protein resides in the cell projection. It is found in the ruffle. Functionally, transmembrane receptor that functions as a pattern recognition receptor recognizing pathogen- and damage-associated molecular patterns (PAMPs and DAMPs) to induce innate immune responses via downstream signaling pathways. At the plasma membrane, cooperates with LY96 to mediate the innate immune response to bacterial lipopolysaccharide (LPS). Also involved in LPS-independent inflammatory responses triggered by free fatty acids, such as palmitate, and Ni(2+). Mechanistically, acts via MYD88, TIRAP and TRAF6, leading to NF-kappa-B activation, cytokine secretion and the inflammatory response. Alternatively, CD14-mediated TLR4 internalization via endocytosis is associated with the initiation of a MYD88-independent signaling via the TICAM1-TBK1-IRF3 axis leading to type I interferon production. In addition to the secretion of proinflammatory cytokines, initiates the activation of NLRP3 inflammasome and formation of a positive feedback loop between autophagy and NF-kappa-B signaling cascade. In complex with TLR6, promotes inflammation in monocytes/macrophages by associating with TLR6 and the receptor CD86. Upon ligand binding, such as oxLDL or amyloid-beta 42, the TLR4:TLR6 complex is internalized and triggers inflammatory response, leading to NF-kappa-B-dependent production of CXCL1, CXCL2 and CCL9 cytokines, via MYD88 signaling pathway, and CCL5 cytokine, via TICAM1 signaling pathway. In myeloid dendritic cells, vesicular stomatitis virus glycoprotein G but not LPS promotes the activation of IRF7, leading to type I IFN production in a CD14-dependent manner. Required for the migration-promoting effects of ZG16B/PAUF on pancreatic cancer cells. This chain is Toll-like receptor 4 (TLR4), found in Homo sapiens (Human).